Here is a 128-residue protein sequence, read N- to C-terminus: Small ribosomal subunit protein uS9 (128 aa).

The protein belongs to the universal ribosomal protein uS9 family.

This Flavobacterium psychrophilum (strain ATCC 49511 / DSM 21280 / CIP 103535 / JIP02/86) protein is Small ribosomal subunit protein uS9.